Here is a 333-residue protein sequence, read N- to C-terminus: MRFWRERGRENKEHMVAPLCGQIRVLVVGDSGVGKSSLVHLIVKGSSIVRPSQTIGCTVGVKHLTYASPASSSSIIKGDSERDFFVELWDVSGHERYKDCRSLFYSQINGVIFVHDLSQRTTKTNLQKWAGEVSVTGEFSAPLSSGGPGGLPVPYIVIGNKADIAAKGGTNGSSGNLVDAARHWVEKQGLLPHSDELPLSESFPSNVGLIMAAKEARYDKEALTKIFHMLIRRRYFSDELPSPSSAWSLSHAPSQRLDEGTSDEDQFYKRTSLREGDAYKYNTLPQHNLMQSPTLYPQQPPDRYNYAIPRFSLSSVEETSNGNGRSKRMDINV.

Residues 11 to 288 form a small GTPase-like region; the sequence is NKEHMVAPLC…YKYNTLPQHN (278 aa). Residues 29 to 36, 90 to 94, and 160 to 163 contribute to the GTP site; these read GDSGVGKS, DVSGH, and NKAD. The span at 242–253 shows a compositional bias: polar residues; it reads SPSSAWSLSHAP. The disordered stretch occupies residues 242-265; the sequence is SPSSAWSLSHAPSQRLDEGTSDED.

This sequence belongs to the small GTPase superfamily.

The protein is Small GTPase-like protein LIP2 of Arabidopsis thaliana (Mouse-ear cress).